Reading from the N-terminus, the 551-residue chain is Glucans biosynthesis protein D (551 aa).

The segment at residues 1–32 (MNRRRFIKGSMAMAAVCGSSGIASLFSQAAFA) is a signal peptide (tat-type signal).

The protein belongs to the OpgD/OpgG family. Predicted to be exported by the Tat system. The position of the signal peptide cleavage has not been experimentally proven.

It localises to the periplasm. It functions in the pathway glycan metabolism; osmoregulated periplasmic glucan (OPG) biosynthesis. In terms of biological role, probably involved in the control of the structural glucose backbone of osmoregulated periplasmic glucans (OPGs). This Salmonella paratyphi A (strain ATCC 9150 / SARB42) protein is Glucans biosynthesis protein D.